The primary structure comprises 1207 residues: RNA-binding protein 20 (1207 aa).

Residues 1–58 are disordered; that stretch reads MVLAAAMSQDADPSGPEQPDRDACIVPGVQGPPAPQGQQGMQPLPPPLPPPPQPQSSL. The span at 43–54 shows a compositional bias: pro residues; the sequence is PLPPPLPPPPQP. The U1-type zinc finger occupies 412–446; it reads HLPHICSICDKKVFDLKDWELHVKGKLHAQKCLLF. The 76-residue stretch at 521–596 folds into the RRM domain; it reads RVVHICNLPE…EKLLIRMSTR (76 aa). Positions 625–637 are enriched in basic and acidic residues; that stretch reads LREADRYGPERPR. 3 disordered regions span residues 625–686, 722–896, and 951–1110; these read LREA…NGED, EKYL…MEEL, and QGET…AELK. The tract at residues 631-650 is RS; it reads YGPERPRSRSPMSRSLSPRS. A phosphoserine mark is found at S638, S640, S643, S645, and S652. The segment covering 639–650 has biased composition (low complexity); it reads RSPMSRSLSPRS. Over residues 668–686 the composition is skewed to basic and acidic residues; that stretch reads YAWRDEDRETVPRRENGED. S729 is modified (phosphoserine). Composition is skewed to basic and acidic residues over residues 740 to 759, 772 to 789, and 796 to 836; these read KGRE…DKHP, RKEE…PEDS, and EPKV…RGAE. Residue S789 is modified to Phosphoserine. The segment covering 839–848 has biased composition (acidic residues); sequence AGTEEQEGME. A phosphoserine mark is found at S853 and S864. Over residues 853–863 the composition is skewed to polar residues; sequence SVGTQQEGTES. The segment covering 867 to 876 has biased composition (basic and acidic residues); the sequence is ENTRTKKGQD. S879, S881, and S963 each carry phosphoserine. Residues 970-979 show a composition bias toward polar residues; the sequence is VPSTSTSCPN. At S999 the chain carries Phosphoserine. Residues 1011–1022 show a composition bias toward basic and acidic residues; the sequence is YEKEARGAEGSD. A phosphoserine mark is found at S1034, S1046, S1057, S1066, S1078, S1096, and S1101. Positions 1050-1072 are enriched in basic and acidic residues; it reads DDCKARGSPEDGPHEVSPLEEKA. The segment covering 1073–1102 has biased composition (polar residues); it reads SPTTESDLQSQACQENSRYTETRSLNSRSP. Residues 1141–1172 form a Matrin-type zinc finger; it reads FYCKLCGLFYTSEEAAKVSHCRSTVHYRNLQK. The disordered stretch occupies residues 1181–1207; the sequence is GLKETEGVDSPSPERSGIGPHLERKKL. Phosphoserine is present on residues S1190 and S1192.

Associates with components of the U1 and U2 U1 small nuclear ribonucleoprotein complexes. Post-translationally, phosphorylation regulates the subcellular localization. Phosphorylation of Ser-638 and Ser-640 in the RS (arginine/serine-rich) region promotes nuclear localization of the protein. In contrast, phosphorylation of the C-terminal disordered region promotes localization to cytoplasmic ribonucleoprotein granules.

The protein localises to the nucleus. Its subcellular location is the cytoplasm. The protein resides in the cytoplasmic ribonucleoprotein granule. In terms of biological role, RNA-binding protein that acts as a regulator of mRNA splicing of a subset of genes encoding key structural proteins involved in cardiac development, such as TTN (Titin), CACNA1C, CAMK2D or PDLIM5/ENH. Acts as a repressor of mRNA splicing: specifically binds the 5'UCUU-3' motif that is predominantly found within intronic sequences of pre-mRNAs, leading to the exclusion of specific exons in target transcripts. RBM20-mediated exon skipping is hormone-dependent and is essential for TTN isoform transition in both cardiac and skeletal muscles. RBM20-mediated exon skipping of TTN provides substrates for the formation of circular RNA (circRNAs) from the TTN transcripts. Together with RBM24, promotes the expression of short isoforms of PDLIM5/ENH in cardiomyocytes. The protein is RNA-binding protein 20 of Rattus norvegicus (Rat).